The sequence spans 491 residues: DEAD-box ATP-dependent RNA helicase 36 (491 aa).

A compositionally biased stretch (acidic residues) spans 1–10; that stretch reads MEEPTPEEEG. Residues 1–56 are disordered; it reads MEEPTPEEEGGITIMSKSRKNPKTVVNIQSQKLDSDQNTPQFEKFTNPNPSSDTTS. A compositionally biased stretch (polar residues) spans 24 to 56; it reads TVVNIQSQKLDSDQNTPQFEKFTNPNPSSDTTS. Positions 58-86 match the Q motif motif; it reads TNFEGLGLAEWAVETCKELGMRKPTPVQT. In terms of domain architecture, Helicase ATP-binding spans 89-262; that stretch reads VPKILAGRDV…EHSSNKAYFY (174 aa). 102–109 serves as a coordination point for ATP; it reads AQTGSGKT. The DEAD box motif lies at 210 to 213; sequence DEAD. In terms of domain architecture, Helicase C-terminal spans 289-438; sequence YLVHILSQME…NKKVITDSLE (150 aa). A disordered region spans residues 471-491; it reads KTLADKGLLKKRGKRQKSTEN. Over residues 479 to 491 the composition is skewed to basic residues; that stretch reads LKKRGKRQKSTEN.

Belongs to the DEAD box helicase family. DDX49/DBP8 subfamily.

The catalysed reaction is ATP + H2O = ADP + phosphate + H(+). The sequence is that of DEAD-box ATP-dependent RNA helicase 36 (RH36) from Arabidopsis thaliana (Mouse-ear cress).